A 453-amino-acid polypeptide reads, in one-letter code: 3-phosphoshikimate 1-carboxyvinyltransferase (453 aa).

Positions M1–D27 are disordered. 3 residues coordinate 3-phosphoshikimate: K28, S29, and R33. Residue K28 participates in phosphoenolpyruvate binding. Phosphoenolpyruvate-binding residues include G101 and R129. 3-phosphoshikimate is bound by residues S175, Q177, D330, and K357. A phosphoenolpyruvate-binding site is contributed by Q177. D330 (proton acceptor) is an active-site residue. Phosphoenolpyruvate contacts are provided by R361 and R405.

This sequence belongs to the EPSP synthase family. In terms of assembly, monomer.

It localises to the cytoplasm. It catalyses the reaction 3-phosphoshikimate + phosphoenolpyruvate = 5-O-(1-carboxyvinyl)-3-phosphoshikimate + phosphate. Its pathway is metabolic intermediate biosynthesis; chorismate biosynthesis; chorismate from D-erythrose 4-phosphate and phosphoenolpyruvate: step 6/7. Functionally, catalyzes the transfer of the enolpyruvyl moiety of phosphoenolpyruvate (PEP) to the 5-hydroxyl of shikimate-3-phosphate (S3P) to produce enolpyruvyl shikimate-3-phosphate and inorganic phosphate. This Methylorubrum extorquens (strain CM4 / NCIMB 13688) (Methylobacterium extorquens) protein is 3-phosphoshikimate 1-carboxyvinyltransferase.